The chain runs to 126 residues: Large ribosomal subunit protein bL19 (126 aa).

It belongs to the bacterial ribosomal protein bL19 family.

Functionally, this protein is located at the 30S-50S ribosomal subunit interface and may play a role in the structure and function of the aminoacyl-tRNA binding site. The protein is Large ribosomal subunit protein bL19 of Bordetella petrii (strain ATCC BAA-461 / DSM 12804 / CCUG 43448).